The following is a 903-amino-acid chain: Pentatricopeptide repeat-containing protein At3g02330, mitochondrial (903 aa).

The N-terminal 31 residues, 1 to 31 (MAESLRLLHMTRSVVSFNRCLTEKISYRRVP), are a transit peptide targeting the mitochondrion. 20 PPR repeats span residues 47-81 (STTN…GFRP), 82-112 (TTFV…MPLR), 113-143 (DVVS…MPVR), 144-178 (DVVS…GIEF), 179-213 (DGRT…GCDT), 214-244 (DVVA…IPEK), 245-279 (NSVS…NAGV), 280-314 (SQSI…DFAA), 346-380 (NRQS…GLGF), 381-415 (DEIS…SLSL), 416-446 (DVCV…MRRR), 447-481 (DAVS…RIEP), 482-515 (DEFT…GMAS), 516-550 (NSSV…ANVS), 567-601 (MCVS…GITP), 602-636 (DKFT…ELQS), 637-667 (DVYI…SLRR), 668-702 (DFVT…NIKP), 703-738 (NHVT…GLDP), and 739-769 (QLPH…MPFE). A type E motif region spans residues 774–850 (IWRTLLGVCT…EPGCSWVELK (77 aa)). Positions 851 to 881 (DELHVFLVGDKAHPRWEEIYEELGLIYSEMK) are type E(+) motif.

This sequence belongs to the PPR family. PCMP-E subfamily. In terms of assembly, interacts with MORF1/RIP8.

The protein resides in the mitochondrion. Functionally, involved in C-to-U editing of mitochondrial RNA. Required for RNA editing at 8 sites in 6 different mRNAs in mitochondria. This chain is Pentatricopeptide repeat-containing protein At3g02330, mitochondrial (PCMP-E90), found in Arabidopsis thaliana (Mouse-ear cress).